The following is a 190-amino-acid chain: B3 domain-containing protein Os02g0764100 (190 aa).

The TF-B3 DNA-binding region spans 17 to 121 (FEKAVTPSDV…KLLFIDCKKN (105 aa)).

The protein localises to the nucleus. The chain is B3 domain-containing protein Os02g0764100 from Oryza sativa subsp. japonica (Rice).